Reading from the N-terminus, the 434-residue chain is Enolase (434 aa).

Ala-41 contributes to the phosphoenolpyruvate binding site. Gln-165 provides a ligand contact to (2R)-2-phosphoglycerate. Glu-207 functions as the Proton donor in the catalytic mechanism. Mg(2+) is bound by residues Asp-244, Glu-291, and Asp-318. Positions 343, 372, 373, and 394 each coordinate phosphoenolpyruvate. (2R)-2-phosphoglycerate is bound by residues Lys-343, Arg-372, Ser-373, and Lys-394. The active-site Proton acceptor is the Lys-343.

The protein belongs to the enolase family. In terms of assembly, homodimer and homooctamer; the homodimer is inactive. Requires Mg(2+) as cofactor.

Its subcellular location is the cytoplasm. The protein localises to the secreted. It localises to the cell surface. The catalysed reaction is (2R)-2-phosphoglycerate = phosphoenolpyruvate + H2O. Its pathway is carbohydrate degradation; glycolysis; pyruvate from D-glyceraldehyde 3-phosphate: step 4/5. Catalyzes the reversible conversion of 2-phosphoglycerate (2-PG) into phosphoenolpyruvate (PEP). It is essential for the degradation of carbohydrates via glycolysis. Its function is as follows. 'Moonlights' as a laminin receptor. Binds laminin when expressed on the bacterial cell surface; this probably induces destruction of the extracellular matrix, favoring invasion and dissemination. The protein is Enolase of Staphylococcus aureus.